Reading from the N-terminus, the 710-residue chain is METRESEDLEKTRRKSASDQWNTDNEPAKVKPELLPEKEETSQADQDIQDKEPHCHIPIKRNSIFNRSIRRKSKAKARDNPERNASCLADSQDNGKSVNEPLTLNIPWSRMPPCRTAMQTDPGAQEMSESSSTPGNGATPEEWPALADSPTTLTEALRMIHPIPADSWRNLIEQIGLLYQEYRDKSTLQEIETRRQQDAEIEDNTNGSPASEDTPEEEEEEEEEEEPASPPERKTLPQICLLSNPHSRFNLWQDLPEIRSSGVLEILQPEEIKLQEAMFELVTSEASYYKSLNLLVSHFMENERIRKILHPSEAHILFSNVLDVLAVSERFLLELEHRMEENIVISDVCDIVYRYAADHFSVYITYVSNQTYQERTYKQLLQEKAAFRELIAQLELDPKCRGLPFSSFLILPFQRITRLKLLVQNILKRVEERSERECTALDAHKELEMVVKACNEGVRKMSRTEQMISIQKKMEFKIKSVPIISHSRWLLKQGELQQMSGPKTSRTLRTKKLFHEIYLFLFNDLLVICRQIPGDKYQVFDSAPRGLLRVEELEDQGQTLANVFILRLLENADDREATYMLKASSQSEMKRWMTSLAPNRRTKFVSFTSRLLDCPQVQCVHPYVAQQPDELTLELADILNILDKTDDGWIFGERLHDQERGWFPSSMTEEILNPKIRSQNLKECFRVHKMDDPQRSQNKDRRKLGSRNRQ.

Composition is skewed to basic and acidic residues over residues 1–11 and 26–41; these read METRESEDLEK and EPAK…KEET. The interval 1–143 is disordered; it reads METRESEDLE…PGNGATPEEW (143 aa). The segment at 1 to 273 is regulatory region; modulates activity toward RHOA, RAC1 and CDC42; sequence METRESEDLE…LEILQPEEIK (273 aa). Composition is skewed to polar residues over residues 89–102 and 127–136; these read ADSQ…NEPL and MSESSSTPGN. The residue at position 179 (Y179) is a Phosphotyrosine. A disordered region spans residues 194–236; it reads RRQQDAEIEDNTNGSPASEDTPEEEEEEEEEEEPASPPERKTL. Positions 213 to 227 are enriched in acidic residues; sequence DTPEEEEEEEEEEEP. The DH domain maps to 273 to 457; it reads KLQEAMFELV…EMVVKACNEG (185 aa). Residues 489–601 form the PH domain; it reads WLLKQGELQQ…WMTSLAPNRR (113 aa). The SH3 domain occupies 612–673; it reads LDCPQVQCVH…PSSMTEEILN (62 aa). Residues 687-699 are compositionally biased toward basic and acidic residues; it reads VHKMDDPQRSQNK. The interval 687–710 is disordered; that stretch reads VHKMDDPQRSQNKDRRKLGSRNRQ. Over residues 700–710 the composition is skewed to basic residues; sequence DRRKLGSRNRQ.

As to quaternary structure, interacts with CDK5R1 and EPHA4; activated by EPHA4 through the CDK5 kinase. Post-translationally, src-dependent phosphorylation at Tyr-179 upon EPHA4 activation increases the guanine exchange factor activity toward RHOA. Phosphorylation by CDK5 upon EPHA4 activation by EFNA1 may regulate dendritic spine morphogenesis. Highly expressed in brain specifically in caudate nucleus and to a lower extent in amygdala and hippocampus. Also detected in lung.

The protein localises to the cytoplasm. It localises to the membrane. It is found in the cell projection. The protein resides in the growth cone. Functionally, acts as a guanine nucleotide exchange factor (GEF) which differentially activates the GTPases RHOA, RAC1 and CDC42. Plays a role in axon guidance regulating ephrin-induced growth cone collapse and dendritic spine morphogenesis. Upon activation by ephrin through EPHA4, the GEF activity switches toward RHOA resulting in its activation. Activated RHOA promotes cone retraction at the expense of RAC1- and CDC42-stimulated growth cone extension. This is Ephexin-1 (NGEF) from Homo sapiens (Human).